The chain runs to 418 residues: Voltage-gated ClC-type chloride channel ClcB (418 aa).

10 helical membrane-spanning segments follow: residues Leu5–Ala25, Leu54–Phe74, Leu146–Gly166, Leu168–Ile188, Ala222–Met242, Trp258–Trp278, Ala291–Ala311, Gly316–Tyr336, Leu352–Met372, and Met380–Ile400.

It belongs to the chloride channel (TC 2.A.49) family. ClcB subfamily.

The protein resides in the cell inner membrane. Its function is as follows. Probably acts as an electrical shunt for an outwardly-directed proton pump that is linked to amino acid decarboxylation, as part of the extreme acid resistance (XAR) response. This chain is Voltage-gated ClC-type chloride channel ClcB, found in Shigella boydii serotype 18 (strain CDC 3083-94 / BS512).